Reading from the N-terminus, the 320-residue chain is Acetyl-coenzyme A carboxylase carboxyl transferase subunit alpha (320 aa).

The region spanning 33 to 294 (AFESEIQALR…GDAVEDELKA (262 aa)) is the CoA carboxyltransferase C-terminal domain.

This sequence belongs to the AccA family. As to quaternary structure, acetyl-CoA carboxylase is a heterohexamer composed of biotin carboxyl carrier protein (AccB), biotin carboxylase (AccC) and two subunits each of ACCase subunit alpha (AccA) and ACCase subunit beta (AccD).

The protein resides in the cytoplasm. The enzyme catalyses N(6)-carboxybiotinyl-L-lysyl-[protein] + acetyl-CoA = N(6)-biotinyl-L-lysyl-[protein] + malonyl-CoA. It participates in lipid metabolism; malonyl-CoA biosynthesis; malonyl-CoA from acetyl-CoA: step 1/1. Its function is as follows. Component of the acetyl coenzyme A carboxylase (ACC) complex. First, biotin carboxylase catalyzes the carboxylation of biotin on its carrier protein (BCCP) and then the CO(2) group is transferred by the carboxyltransferase to acetyl-CoA to form malonyl-CoA. The chain is Acetyl-coenzyme A carboxylase carboxyl transferase subunit alpha from Caulobacter sp. (strain K31).